Here is a 101-residue protein sequence, read N- to C-terminus: Small ribosomal subunit protein uS14 (101 aa).

Belongs to the universal ribosomal protein uS14 family. Part of the 30S ribosomal subunit. Contacts proteins S3 and S10.

In terms of biological role, binds 16S rRNA, required for the assembly of 30S particles and may also be responsible for determining the conformation of the 16S rRNA at the A site. The polypeptide is Small ribosomal subunit protein uS14 (Cellvibrio japonicus (strain Ueda107) (Pseudomonas fluorescens subsp. cellulosa)).